The following is a 549-amino-acid chain: Probable protein kinase UbiB (549 aa).

Residues 123–501 (DFNEIPLASA…QQQAHKSNYL (379 aa)) form the Protein kinase domain. ATP-binding positions include 129-137 (LASASISQV) and Lys-152. Asp-287 serves as the catalytic Proton acceptor. 2 helical membrane-spanning segments follow: residues 496–516 (HKSN…TLLI) and 520–540 (ATLW…FVGW).

Belongs to the ABC1 family. UbiB subfamily.

It localises to the cell inner membrane. It functions in the pathway cofactor biosynthesis; ubiquinone biosynthesis [regulation]. Functionally, is probably a protein kinase regulator of UbiI activity which is involved in aerobic coenzyme Q (ubiquinone) biosynthesis. The polypeptide is Probable protein kinase UbiB (Shewanella baltica (strain OS223)).